We begin with the raw amino-acid sequence, 138 residues long: Peptide methionine sulfoxide reductase MsrB (138 aa).

The MsrB domain occupies 15-137 (EAEWRAQLDP…NSASLGFEPR (123 aa)). Zn(2+)-binding residues include Cys54, Cys57, Cys103, and Cys106. The Nucleophile role is filled by Cys126.

The protein belongs to the MsrB Met sulfoxide reductase family. Zn(2+) serves as cofactor.

It catalyses the reaction L-methionyl-[protein] + [thioredoxin]-disulfide + H2O = L-methionyl-(R)-S-oxide-[protein] + [thioredoxin]-dithiol. The polypeptide is Peptide methionine sulfoxide reductase MsrB (Methylibium petroleiphilum (strain ATCC BAA-1232 / LMG 22953 / PM1)).